The primary structure comprises 662 residues: Probable quinol oxidase subunit 1 (662 aa).

Transmembrane regions (helical) follow at residues 14–34 (WMITMAQIGAPFLVIGLIAVI) and 58–78 (IMYLICAVLMFVRGGIDALLI). H102 contacts Fe(II)-heme a. 8 helical membrane passes run 103 to 123 (GVIMIIFMAMPFIFGLWNIVV), 140 to 160 (VSFWLFFAGMILFNLSFIIGG), 187 to 207 (IAIQISGLGTLATGINFFVTI), 228 to 248 (FITTLIVILAFPPLTVALALM), 273 to 293 (FFWVWGHPEVYIVILPAFGIY), 311 to 331 (MVWATAGIAFLSFLVWVHHFF), 336 to 356 (GALINSFFSISTMLIGIPTGV), and 376 to 396 (MLFSLAFIPNFLLGGVTGVML). The Cu cation site is built by H279, Y283, H328, and H329. Positions 279–283 (HPEVY) form a cross-link, 1'-histidyl-3'-tyrosine (His-Tyr). Residue H414 participates in heme a3 binding. 5 helical membrane-spanning segments follow: residues 415 to 435 (FHYTLVTGVVFACLAGLIFWY), 451 to 471 (CFWFFMIGFNVCFLPQFILGL), 493 to 513 (ISTIGALLMAIGFLFLVVSIV), 587 to 604 (PVGFWIGIFMTIGGFFLI), and 608 to 627 (VIPALICLFGIFGTMIYRSF). Fe(II)-heme a is bound at residue H416.

It belongs to the heme-copper respiratory oxidase family. Cu cation is required as a cofactor. It depends on ferriheme a as a cofactor. The cofactor is Heme A3..

The protein resides in the cell membrane. It carries out the reaction 2 a quinol + O2 = 2 a quinone + 2 H2O. The protein operates within energy metabolism; oxidative phosphorylation. Functionally, catalyzes quinol oxidation with the concomitant reduction of oxygen to water. The protein is Probable quinol oxidase subunit 1 (qoxB) of Staphylococcus aureus (strain MRSA252).